A 99-amino-acid polypeptide reads, in one-letter code: UPF0235 protein ASA_3628 (99 aa).

Belongs to the UPF0235 family.

The polypeptide is UPF0235 protein ASA_3628 (Aeromonas salmonicida (strain A449)).